A 180-amino-acid polypeptide reads, in one-letter code: Putative 5'(3')-deoxyribonucleotidase (180 aa).

Asp9 acts as the Nucleophile in catalysis. 3 residues coordinate Mg(2+): Asp9, Asp11, and Asp135. Catalysis depends on Asp11, which acts as the Proton donor.

The protein belongs to the 5'(3')-deoxyribonucleotidase family. Mg(2+) is required as a cofactor.

Functionally, dephosphorylates the 5' and 2'(3')-phosphates of deoxyribonucleotides. This Staphylococcus aureus (strain MSSA476) protein is Putative 5'(3')-deoxyribonucleotidase.